A 139-amino-acid polypeptide reads, in one-letter code: Probable transcription termination protein NusA (139 aa).

In terms of domain architecture, KH spans 31-97; sequence DDRVVYVVTA…YNVTVSENDT (67 aa).

Belongs to the NusA family.

The protein resides in the cytoplasm. Participates in transcription termination. The chain is Probable transcription termination protein NusA from Halobacterium salinarum (strain ATCC 29341 / DSM 671 / R1).